The primary structure comprises 233 residues: Phosphoglycolate phosphatase (233 aa).

D13 serves as the catalytic Nucleophile. The Mg(2+) site is built by D13, D15, and D175.

It belongs to the HAD-like hydrolase superfamily. CbbY/CbbZ/Gph/YieH family. The cofactor is Mg(2+).

It carries out the reaction 2-phosphoglycolate + H2O = glycolate + phosphate. It participates in organic acid metabolism; glycolate biosynthesis; glycolate from 2-phosphoglycolate: step 1/1. Functionally, specifically catalyzes the dephosphorylation of 2-phosphoglycolate. Is involved in the dissimilation of the intracellular 2-phosphoglycolate formed during the DNA repair of 3'-phosphoglycolate ends, a major class of DNA lesions induced by oxidative stress. This chain is Phosphoglycolate phosphatase, found in Agrobacterium fabrum (strain C58 / ATCC 33970) (Agrobacterium tumefaciens (strain C58)).